A 395-amino-acid polypeptide reads, in one-letter code: NKAP-like protein (395 aa).

Disordered stretches follow at residues 1 to 77 and 91 to 247; these read MSPV…RPLP and CGGY…ISCK. Phosphoserine occurs at positions 23 and 25. Residues 25–35 are compositionally biased toward polar residues; sequence SPPSALQTSRS. The segment covering 109-130 has biased composition (basic and acidic residues); the sequence is DQEKEKEESYRQRRLKERERIG. The residue at position 149 (Ser-149) is a Phosphoserine. The segment covering 150 to 161 has biased composition (basic and acidic residues); it reads DEHTPAEDEVKN. Basic residues-rich tracts occupy residues 177 to 197 and 214 to 238; these read KTSH…KHKK and KKVK…KRTK.

It belongs to the NKAP family. As to quaternary structure, interacts with RBPJ, CIR1 and HDAC3. In terms of tissue distribution, specific to testis (at protein level). Detected in differenting spermatogonia and early spermatocytes (at protein level).

Its subcellular location is the nucleus. Functionally, transcriptional repressor of Notch-mediated signaling. Required for spermatogenesis. This Mus musculus (Mouse) protein is NKAP-like protein.